The following is an 87-amino-acid chain: Keratin-associated protein 7-1 (87 aa).

An 11 X 2 AA repeats of G-[YCGS] region spans residues 43–84 (GCGCNGYSSLGYSFGGSNINNLGGCYGGSFYRPWGSGSGFGY).

Belongs to the KRTAP type 7 family. As to quaternary structure, interacts with hair keratins. Expressed in the upper portion of the hair cortex.

Its function is as follows. In the hair cortex, hair keratin intermediate filaments are embedded in an interfilamentous matrix, consisting of hair keratin-associated proteins (KRTAP), which are essential for the formation of a rigid and resistant hair shaft through their extensive disulfide bond cross-linking with abundant cysteine residues of hair keratins. The matrix proteins include the high-sulfur and high-glycine-tyrosine keratins. The chain is Keratin-associated protein 7-1 (KRTAP7-1) from Homo sapiens (Human).